The sequence spans 139 residues: Actin-depolymerizing factor (139 aa).

In terms of domain architecture, ADF-H spans 5 to 139 (SSGMAVDDEC…SMDIIKARAF (135 aa)).

It belongs to the actin-binding proteins ADF family. As to expression, preferentially in mature anther.

In terms of biological role, actin-depolymerizing protein. Severs actin filaments (F-actin) and binds to actin monomers. The sequence is that of Actin-depolymerizing factor from Lilium longiflorum (Trumpet lily).